Reading from the N-terminus, the 254-residue chain is Floral homeotic protein APETALA 1 (254 aa).

Residues 3-57 form the MADS-box domain; sequence RGRVQLKRIENKINRQVTFSKRRAGLLKKAHEISVLCDAEVALVVFSHKGKLFEY. In terms of domain architecture, K-box spans 88–178; it reads NTNWSMEYNR…SKQIKEREKI (91 aa).

It localises to the nucleus. Its function is as follows. Controls floral meristem identity. Is also required for normal development of sepals and petals. Is required for the transition of an influorescence meristem into a floral meristem. Interacts with LEAFY. This is Floral homeotic protein APETALA 1 (AP1) from Sinapis alba (White mustard).